The sequence spans 203 residues: Tegument protein UL51 homolog (203 aa).

Cys-4 carries the S-palmitoyl cysteine; by host lipid modification.

It belongs to the herpesviridae UL51 family. In terms of assembly, oligomerizes. Interacts with U75; this interaction mediates U75 incorporation to virions. Phosphorylated. In terms of processing, palmitoylation is necessary for Golgi localization.

The protein resides in the virion tegument. The protein localises to the host cytoplasm. It is found in the host Golgi apparatus. In terms of biological role, plays several roles during the time course of infection, including egress of virus particles from the perinuclear space and secondary envelopment of cytoplasmic capsids that bud into specific trans-Golgi network (TGN)-derived membranes. This chain is Tegument protein UL51 homolog (U44), found in Homo sapiens (Human).